The sequence spans 293 residues: Tumor necrosis factor receptor superfamily member 13B (293 aa).

The Extracellular portion of the chain corresponds to 1–165 (MSGLGRSRRG…SADQVALVYS (165 aa)). TNFR-Cys repeat units follow at residues 33–67 (SCPE…AFCR) and 70–104 (SCRK…AYFC). 6 disulfide bridges follow: cysteine 34–cysteine 47, cysteine 50–cysteine 62, cysteine 54–cysteine 66, cysteine 71–cysteine 86, cysteine 89–cysteine 100, and cysteine 93–cysteine 104. Positions 115-146 (PPELRRQRSGEVENNSDNSGRYQGLEHRGSEA) are disordered. Polar residues predominate over residues 126 to 135 (VENNSDNSGR). Asparagine 128 is a glycosylation site (N-linked (GlcNAc...) asparagine). Residues 166-186 (TLGLCLCAVLCCFLVAVACFL) form a helical; Signal-anchor for type III membrane protein membrane-spanning segment. The Cytoplasmic portion of the chain corresponds to 187–293 (KKRGDPCSCQ…VPAQEGGPGA (107 aa)). Positions 192-226 (PCSCQPRSRPRQSPAKSSQDHAMEAGSPVSTSPEP) are disordered.

Binds TRAF2, TRAF5 and TRAF6. Binds the NH2-terminal domain of CAMLG with its C-terminus. Highly expressed in spleen, thymus, small intestine and peripheral blood leukocytes. Expressed in resting B-cells and activated T-cells, but not in resting T-cells.

The protein resides in the membrane. Receptor for TNFSF13/APRIL and TNFSF13B/TALL1/BAFF/BLYS that binds both ligands with similar high affinity. Mediates calcineurin-dependent activation of NF-AT, as well as activation of NF-kappa-B and AP-1. Involved in the stimulation of B- and T-cell function and the regulation of humoral immunity. The sequence is that of Tumor necrosis factor receptor superfamily member 13B (TNFRSF13B) from Homo sapiens (Human).